Here is a 410-residue protein sequence, read N- to C-terminus: Arginine deiminase (410 aa).

C400 serves as the catalytic Amidino-cysteine intermediate.

It belongs to the arginine deiminase family.

Its subcellular location is the cytoplasm. The enzyme catalyses L-arginine + H2O = L-citrulline + NH4(+). It participates in amino-acid degradation; L-arginine degradation via ADI pathway; carbamoyl phosphate from L-arginine: step 1/2. This is Arginine deiminase from Streptococcus uberis (strain ATCC BAA-854 / 0140J).